Consider the following 347-residue polypeptide: NADH-ubiquinone oxidoreductase chain 2 (347 aa).

10 helical membrane-spanning segments follow: residues 3–23 (PIIY…VMIS), 25–45 (HWLL…PVLM), 59–79 (YFLT…INLL), 89–109 (MFNP…LGLS), 149–169 (INPN…GWGG), 178–198 (IMAY…PYNT), 200–220 (MTIL…MLLI), 237–257 (MPVI…LPPL), 274–294 (ESII…YFYM), and 325–345 (LLPT…ALSS).

It belongs to the complex I subunit 2 family. In terms of assembly, core subunit of respiratory chain NADH dehydrogenase (Complex I) which is composed of 45 different subunits. Interacts with TMEM242.

It is found in the mitochondrion inner membrane. It carries out the reaction a ubiquinone + NADH + 5 H(+)(in) = a ubiquinol + NAD(+) + 4 H(+)(out). Functionally, core subunit of the mitochondrial membrane respiratory chain NADH dehydrogenase (Complex I) which catalyzes electron transfer from NADH through the respiratory chain, using ubiquinone as an electron acceptor. Essential for the catalytic activity and assembly of complex I. This Sus scrofa (Pig) protein is NADH-ubiquinone oxidoreductase chain 2.